The following is a 207-amino-acid chain: Ras-related protein Rab-8B (207 aa).

Residues Ser17, Gly18, Val19, Gly20, Lys21, Thr22, Cys23, Thr35, Ser39, and Thr40 each coordinate GTP. Residue Thr22 participates in Mg(2+) binding. 2 consecutive short sequence motifs (switch) follow at residues 31–45 and 63–80; these read DAFN…GIDF and DTAG…YYRG. Mg(2+)-binding residues include Thr40 and Asp63. GTP is bound at residue Gly66. Position 72 is a phosphothreonine; by LRRK2 (Thr72). Residues Asn121, Lys122, Asp124, Ala152, and Lys153 each coordinate GTP. Ser180 bears the Phosphoserine mark. Cys204 carries the cysteine methyl ester modification. Cys204 carries the S-geranylgeranyl cysteine lipid modification. A propeptide spans 205 to 207 (removed in mature form); sequence SLL.

It belongs to the small GTPase superfamily. Rab family. As to quaternary structure, associated with actin, delta-catenin and alpha and beta tubulins. Interacts with OTOF. Interacts with PEX5R. Interacts with RAB3IP. Interacts with VIM. Interacts with CDH1. Interacts with MICALL2. Interacts with GDI1, GDI2, CHML and CHM; phosphorylation at Thr-72 disrupts these interactions. Interacts with MICAL1. The cofactor is Mg(2+). Phosphorylation of Thr-72 in the switch II region by LRRK2 prevents the association of RAB regulatory proteins, including CHM, CHML and RAB GDP dissociation inhibitors GDI1 and GDI2.

Its subcellular location is the cell membrane. It is found in the cytoplasmic vesicle. The protein localises to the phagosome. The protein resides in the phagosome membrane. It localises to the endosome membrane. It catalyses the reaction GTP + H2O = GDP + phosphate + H(+). Its activity is regulated as follows. Regulated by guanine nucleotide exchange factors (GEFs) including RAB3IP/RABIN8 which promotes the exchange of bound GDP for free GTP. Regulated by GTPase activating proteins (GAPs) which increase the GTP hydrolysis activity. Inhibited by GDP dissociation inhibitors (GDIs). Functionally, the small GTPases Rab are key regulators of intracellular membrane trafficking, from the formation of transport vesicles to their fusion with membranes. Rabs cycle between an inactive GDP-bound form and an active GTP-bound form that is able to recruit to membranes different sets of downstream effectors directly responsible for vesicle formation, movement, tethering and fusion. RAB8B may be involved in polarized vesicular trafficking and neurotransmitter release. May participate in cell junction dynamics in Sertoli cells. May also participate in the export of a subset of neosynthesized proteins through a Rab8-Rab10-Rab11-dependent endososomal export route. The protein is Ras-related protein Rab-8B of Homo sapiens (Human).